A 172-amino-acid chain; its full sequence is Lipoprotein signal peptidase (172 aa).

3 helical membrane passes run 10 to 30 (LIWL…KAWV), 68 to 88 (WQLW…AFWL), and 98 to 118 (SALP…DRLM). Active-site residues include Asp124 and Asp142. A helical transmembrane segment spans residues 138–158 (FNIADSAIVGGAIGIAVFGLF).

Belongs to the peptidase A8 family.

The protein resides in the cell inner membrane. The enzyme catalyses Release of signal peptides from bacterial membrane prolipoproteins. Hydrolyzes -Xaa-Yaa-Zaa-|-(S,diacylglyceryl)Cys-, in which Xaa is hydrophobic (preferably Leu), and Yaa (Ala or Ser) and Zaa (Gly or Ala) have small, neutral side chains.. The protein operates within protein modification; lipoprotein biosynthesis (signal peptide cleavage). Its function is as follows. This protein specifically catalyzes the removal of signal peptides from prolipoproteins. This chain is Lipoprotein signal peptidase, found in Xanthomonas axonopodis pv. citri (strain 306).